The chain runs to 31 residues: Photosystem II reaction center protein T (31 aa).

A helical transmembrane segment spans residues 3–23; that stretch reads ALVYTFLLIGTLGIIFFAIFF.

It belongs to the PsbT family. As to quaternary structure, PSII is composed of 1 copy each of membrane proteins PsbA, PsbB, PsbC, PsbD, PsbE, PsbF, PsbH, PsbI, PsbJ, PsbK, PsbL, PsbM, PsbT, PsbY, PsbZ, Psb30/Ycf12, at least 3 peripheral proteins of the oxygen-evolving complex and a large number of cofactors. It forms dimeric complexes.

It is found in the plastid. The protein resides in the chloroplast thylakoid membrane. Functionally, found at the monomer-monomer interface of the photosystem II (PS II) dimer, plays a role in assembly and dimerization of PSII. PSII is a light-driven water plastoquinone oxidoreductase, using light energy to abstract electrons from H(2)O, generating a proton gradient subsequently used for ATP formation. The protein is Photosystem II reaction center protein T of Tetradesmus obliquus (Green alga).